The sequence spans 149 residues: Large ribosomal subunit protein uL15 (149 aa).

Positions 1 to 11 are enriched in basic and acidic residues; sequence MSDPIKLHDLR. A disordered region spans residues 1-44; it reads MSDPIKLHDLRPAPGAKKAKTRVGRGEASKGKTAGRGTKGTKAR.

This sequence belongs to the universal ribosomal protein uL15 family. As to quaternary structure, part of the 50S ribosomal subunit.

Binds to the 23S rRNA. The chain is Large ribosomal subunit protein uL15 from Corynebacterium jeikeium (strain K411).